A 233-amino-acid polypeptide reads, in one-letter code: Cysteine-rich venom protein LIO1 (233 aa).

The N-terminal stretch at 1 to 18 (MIVFILLSFAAVLQQSFG) is a signal peptide. In terms of domain architecture, SCP spans 37 to 165 (VDTHNSYRRS…PYNYFYVCQY (129 aa)). 7 disulfides stabilise this stretch: Cys-74/Cys-152, Cys-91/Cys-166, Cys-147/Cys-163, Cys-185/Cys-192, Cys-188/Cys-197, Cys-210/Cys-228, and Cys-219/Cys-232. The ShKT domain occupies 201–233 (CTSENVFTNCNDMVKESGCQDERMKSICPASCF).

This sequence belongs to the CRISP family. In terms of tissue distribution, expressed by the venom gland.

It localises to the secreted. Its function is as follows. Blocks contraction of smooth muscle elicited by high potassium-induced depolarization, but does not block caffeine-stimulated contraction. May target voltage-gated calcium channels on smooth muscle. This chain is Cysteine-rich venom protein LIO1, found in Erythrolamprus poecilogyrus (Water snake).